The following is a 354-amino-acid chain: Protein Wnt-9a (354 aa).

Positions 1–15 are cleaved as a signal peptide; it reads MALLRALLGLLACTP. Cystine bridges form between C85–C96, C133–C141, C143–C160, C207–C221, and C209–C216. Residue N95 is glycosylated (N-linked (GlcNAc...) asparagine). S213 carries the O-palmitoleoyl serine; by PORCN lipid modification. Residues 246-271 are disordered; the sequence is GSTTNEATGEGDISPPKKSIPGHSDQ. 6 disulfides stabilise this stretch: C288/C313, C302/C308, C312/C352, C328/C343, C330/C340, and C335/C336.

This sequence belongs to the Wnt family. Palmitoleoylation is required for efficient binding to frizzled receptors. Depalmitoleoylation leads to Wnt signaling pathway inhibition.

The protein localises to the secreted. The protein resides in the extracellular space. It is found in the extracellular matrix. Its function is as follows. Ligand for members of the frizzled family of seven transmembrane receptors. Functions in the canonical Wnt/beta-catenin signaling pathway. Plays a role in embryonic chondrocyte maturation and in embryonic bone mineralization. The sequence is that of Protein Wnt-9a (WNT9A) from Gallus gallus (Chicken).